Reading from the N-terminus, the 237-residue chain is Immunoglobulin superfamily member 6 (237 aa).

Residues 1-27 form the signal peptide; it reads MGPVSARRSRLRPEISLILFQVGMVGA. The Extracellular segment spans residues 28–152; sequence CTVYVLQPGY…ERLFSKEVRS (125 aa). The 105-residue stretch at 30-134 folds into the Ig-like C2-type domain; sequence VYVLQPGYLE…ELSPSAKHVG (105 aa). The cysteines at positions 51 and 118 are disulfide-linked. Residues 153–173 traverse the membrane as a helical segment; sequence FLIVLLALLSVYITGVCVTFI. At 174–237 the chain is on the cytoplasmic side; the sequence is VLFKSKSNGP…RKALPNPGRA (64 aa). Residues 215–229 are compositionally biased toward basic and acidic residues; it reads TSHLPEQEGTDENRK. The segment at 215–237 is disordered; the sequence is TSHLPEQEGTDENRKALPNPGRA.

As to expression, ubiquitous with higher expression in immune tissue.

It is found in the membrane. The sequence is that of Immunoglobulin superfamily member 6 (Igsf6) from Mus musculus (Mouse).